A 56-amino-acid polypeptide reads, in one-letter code: Large ribosomal subunit protein bL33 (56 aa).

Belongs to the bacterial ribosomal protein bL33 family.

In Helicobacter hepaticus (strain ATCC 51449 / 3B1), this protein is Large ribosomal subunit protein bL33.